The chain runs to 467 residues: Uronate isomerase (467 aa).

Belongs to the metallo-dependent hydrolases superfamily. Uronate isomerase family.

It carries out the reaction D-glucuronate = D-fructuronate. The catalysed reaction is aldehydo-D-galacturonate = keto-D-tagaturonate. The protein operates within carbohydrate metabolism; pentose and glucuronate interconversion. The protein is Uronate isomerase of Haemophilus influenzae (strain 86-028NP).